The chain runs to 296 residues: MDMEKARLRSHMLIESLPYLQKFQGKVIVIKYGGHAMKDTLLKQSFAQSIALLNLVGIHPIVVHGGGPQIGNMLSRLNIQSEFREGLRVTDKATMDVVEMVLAGSVNKEIVNQVNQAGAKAVGLSGKDGAFILAEKNDLILTKENQPPEIINLGNVGRVVHIETSLLYTLIEKGFIPIIAPVGTDNKQTYNINADEVAGAIAGALKATRLLLLTDVEGILDLNKKLIQSIYLEDTPKLFSDGIVFGGMIPKLQCCIEAIEQGVEKVVILDGRLEHSILLELFTDQGVGTEIVKKPV.

Substrate contacts are provided by residues 66–67 (GG), Arg-88, and Asn-191.

Belongs to the acetylglutamate kinase family. ArgB subfamily.

The protein localises to the cytoplasm. The enzyme catalyses N-acetyl-L-glutamate + ATP = N-acetyl-L-glutamyl 5-phosphate + ADP. It participates in amino-acid biosynthesis; L-arginine biosynthesis; N(2)-acetyl-L-ornithine from L-glutamate: step 2/4. Functionally, catalyzes the ATP-dependent phosphorylation of N-acetyl-L-glutamate. This Lawsonia intracellularis (strain PHE/MN1-00) protein is Acetylglutamate kinase.